We begin with the raw amino-acid sequence, 139 residues long: Putative pre-16S rRNA nuclease (139 aa).

This sequence belongs to the YqgF nuclease family.

The protein resides in the cytoplasm. Could be a nuclease involved in processing of the 5'-end of pre-16S rRNA. This Rubrobacter xylanophilus (strain DSM 9941 / JCM 11954 / NBRC 16129 / PRD-1) protein is Putative pre-16S rRNA nuclease.